We begin with the raw amino-acid sequence, 670 residues long: Tyramine beta-hydroxylase (670 aa).

Positions 26 to 35 are enriched in basic residues; it reads HHQLAYHHHK. The segment at 26-63 is disordered; the sequence is HHQLAYHHHKQEQQQQQQQQQQQQAKQKQKQNGVQQGR. Residues 38 to 61 show a composition bias toward low complexity; the sequence is QQQQQQQQQQQQAKQKQKQNGVQQ. Residues 65–81 traverse the membrane as a helical segment; it reads PTFMPVMLLLLMATLLT. Positions 104–220 constitute a DOMON domain; it reads KEIKLSWMVD…GTMYVVWARG (117 aa). Asn235 carries N-linked (GlcNAc...) asparagine glycosylation. The active site involves Tyr281. 2 cysteine pairs are disulfide-bonded: Cys283/Cys334 and Cys319/Cys344. His312 and His313 together coordinate Cu(2+). Residues His382, His461, His463, and Met536 each coordinate Cu(2+). 3 disulfide bridges follow: Cys439/Cys552, Cys443/Cys613, and Cys515/Cys537. The active site involves His461. Residue Asn614 is glycosylated (N-linked (GlcNAc...) asparagine).

It belongs to the copper type II ascorbate-dependent monooxygenase family. As to quaternary structure, is most likely a monomer under physiological conditions, although under conditions of high pH and low ionic strength the dimeric form predominates. Both forms are equally active. The cofactor is Cu(2+). In terms of tissue distribution, present in head and in neurons innervating the oviduct (at protein level).

The protein localises to the membrane. The catalysed reaction is tyramine + L-ascorbate + O2 = (R)-octopamine + L-dehydroascorbate + H2O. Its function is as follows. Catalyzes the hydroxylation of tyramine into octopamine, a neurotransmitter involved in ovulation and locomotion. Functions in an amine-mediated Bacc-dependent signaling pathway that negatively regulates acute ethanol sensitivity. Involved in facilitation of nociceptive escape behavior in response to potentially damaging stimuli, such as high temperatures. The chain is Tyramine beta-hydroxylase (Tbh) from Drosophila melanogaster (Fruit fly).